Consider the following 761-residue polypeptide: RNA-binding protein 12B (761 aa).

S98, S101, and S112 each carry phosphoserine. K114 is covalently cross-linked (Glycyl lysine isopeptide (Lys-Gly) (interchain with G-Cter in SUMO2)). The segment at 120 to 147 (SGYGSSINQDAGFHSNGTGHGNLRPRKT) is disordered. A Glycyl lysine isopeptide (Lys-Gly) (interchain with G-Cter in SUMO2) cross-link involves residue K151. One can recognise an RRM 1 domain in the interval 155–230 (PYLFLRGLPY…RFIEVMQGSE (76 aa)). A compositionally biased stretch (basic and acidic residues) spans 247–262 (LRRSEEHSPPRGINDR). The disordered stretch occupies residues 247-278 (LRRSEEHSPPRGINDRHFRKRSHSKSPRRTRS). S250 and S254 each carry phosphoserine. The span at 263–278 (HFRKRSHSKSPRRTRS) shows a compositional bias: basic residues. At T276 the chain carries Phosphothreonine. 4 positions are modified to phosphoserine: S278, S280, S292, and S294. The region spanning 284–360 (FYVHLKNLSL…RPVHIDPISR (77 aa)) is the RRM 2 domain. An N6-acetyllysine modification is found at K319. A Glycyl lysine isopeptide (Lys-Gly) (interchain with G-Cter in SUMO2) cross-link involves residue K335. Basic and acidic residues predominate over residues 372–384 (KKRSGSPERDRPG). A disordered region spans residues 372–392 (KKRSGSPERDRPGHVSQKYSQ). At S377 the chain carries Phosphoserine. Residues 400 to 477 (LCIYIRNFPF…TEVLLRLISE (78 aa)) enclose the RRM 3 domain. Residues K514 and K541 each participate in a glycyl lysine isopeptide (Lys-Gly) (interchain with G-Cter in SUMO2) cross-link. Positions 538-621 (DNFKHPQRDF…RHPREEDWRR (84 aa)) are enriched in basic and acidic residues. Residues 538-690 (DNFKHPQRDF…THQMKTSGAL (153 aa)) are disordered. 2 positions are modified to phosphoserine: S575 and S591. The span at 627–654 (LQSTSGGHPQSISGGHPQSISGARPRST) shows a compositional bias: polar residues. The segment covering 661–672 (SISGGRLRSISG) has biased composition (low complexity).

The sequence is that of RNA-binding protein 12B (RBM12B) from Pongo abelii (Sumatran orangutan).